The following is a 380-amino-acid chain: Succinyl-diaminopimelate desuccinylase (380 aa).

His69 is a Zn(2+) binding site. Asp71 is an active-site residue. Asp102 is a binding site for Zn(2+). The Proton acceptor role is filled by Glu135. The Zn(2+) site is built by Glu136, Glu164, and His353.

This sequence belongs to the peptidase M20A family. DapE subfamily. Homodimer. Zn(2+) serves as cofactor. The cofactor is Co(2+).

It carries out the reaction N-succinyl-(2S,6S)-2,6-diaminopimelate + H2O = (2S,6S)-2,6-diaminopimelate + succinate. It functions in the pathway amino-acid biosynthesis; L-lysine biosynthesis via DAP pathway; LL-2,6-diaminopimelate from (S)-tetrahydrodipicolinate (succinylase route): step 3/3. Its function is as follows. Catalyzes the hydrolysis of N-succinyl-L,L-diaminopimelic acid (SDAP), forming succinate and LL-2,6-diaminopimelate (DAP), an intermediate involved in the bacterial biosynthesis of lysine and meso-diaminopimelic acid, an essential component of bacterial cell walls. The sequence is that of Succinyl-diaminopimelate desuccinylase from Cereibacter sphaeroides (strain ATCC 17029 / ATH 2.4.9) (Rhodobacter sphaeroides).